Here is a 255-residue protein sequence, read N- to C-terminus: Imidazole glycerol phosphate synthase subunit HisF (255 aa).

Residues aspartate 12 and aspartate 131 contribute to the active site.

This sequence belongs to the HisA/HisF family. In terms of assembly, heterodimer of HisH and HisF.

Its subcellular location is the cytoplasm. It catalyses the reaction 5-[(5-phospho-1-deoxy-D-ribulos-1-ylimino)methylamino]-1-(5-phospho-beta-D-ribosyl)imidazole-4-carboxamide + L-glutamine = D-erythro-1-(imidazol-4-yl)glycerol 3-phosphate + 5-amino-1-(5-phospho-beta-D-ribosyl)imidazole-4-carboxamide + L-glutamate + H(+). The protein operates within amino-acid biosynthesis; L-histidine biosynthesis; L-histidine from 5-phospho-alpha-D-ribose 1-diphosphate: step 5/9. Its function is as follows. IGPS catalyzes the conversion of PRFAR and glutamine to IGP, AICAR and glutamate. The HisF subunit catalyzes the cyclization activity that produces IGP and AICAR from PRFAR using the ammonia provided by the HisH subunit. The protein is Imidazole glycerol phosphate synthase subunit HisF of Ruthia magnifica subsp. Calyptogena magnifica.